Consider the following 437-residue polypeptide: Citrate synthase (437 aa).

Active-site residues include H316 and D372.

It belongs to the citrate synthase family. Homohexamer.

The enzyme catalyses oxaloacetate + acetyl-CoA + H2O = citrate + CoA + H(+). Its pathway is carbohydrate metabolism; tricarboxylic acid cycle; isocitrate from oxaloacetate: step 1/2. Its activity is regulated as follows. Weakly inhibited by ATP (apparent Ki = 10 mm). This is Citrate synthase (gltA) from Corynebacterium glutamicum (strain ATCC 13032 / DSM 20300 / JCM 1318 / BCRC 11384 / CCUG 27702 / LMG 3730 / NBRC 12168 / NCIMB 10025 / NRRL B-2784 / 534).